The following is a 313-amino-acid chain: Olfactory receptor 10K1 (313 aa).

Residues M1 to Q25 are Extracellular-facing. N-linked (GlcNAc...) asparagine glycosylation is present at N5. The helical transmembrane segment at L26–I46 threads the bilayer. Residues S47–A54 are Cytoplasmic-facing. Residues L55–F75 form a helical membrane-spanning segment. Residues V76–I99 lie on the Extracellular side of the membrane. The helical transmembrane segment at Q100 to Y120 threads the bilayer. Over D121–G139 the chain is Cytoplasmic. The helical transmembrane segment at V140–T160 threads the bilayer. The Extracellular segment spans residues S161 to L197. A helical transmembrane segment spans residues V198 to S217. At Y218–T237 the chain is on the cytoplasmic side. A helical transmembrane segment spans residues F238 to I258. The Extracellular segment spans residues Y259–D271. N-linked (GlcNAc...) asparagine glycosylation is present at N265. A helical transmembrane segment spans residues T272–L292. The Cytoplasmic segment spans residues R293 to S313.

This sequence belongs to the G-protein coupled receptor 1 family.

Its subcellular location is the cell membrane. In terms of biological role, odorant receptor. The chain is Olfactory receptor 10K1 (OR10K1) from Homo sapiens (Human).